Consider the following 349-residue polypeptide: Putative phytanoyl-CoA dioxygenase (349 aa).

Residues lysine 118 and 169–171 (HLD) each bind 2-oxoglutarate. Fe cation-binding residues include histidine 169 and aspartate 171.

The protein belongs to the PhyH family. Fe cation serves as cofactor. It depends on L-ascorbate as a cofactor.

The enzyme catalyses phytanoyl-CoA + 2-oxoglutarate + O2 = 2-hydroxyphytanoyl-CoA + succinate + CO2. Its pathway is lipid metabolism; fatty acid metabolism. Converts phytanoyl-CoA to 2-hydroxyphytanoyl-CoA. The polypeptide is Putative phytanoyl-CoA dioxygenase (Dictyostelium discoideum (Social amoeba)).